A 155-amino-acid polypeptide reads, in one-letter code: MQNLEGSGDGQQVEMWTDGACKGNPGPGGWGVLMRAGQHEKTMHGGERQTTNNRMELMAVIEGLRALKRPCRVTIHTDSQYVMKGMTEWLANWKRRGWRTADKKPVKNVELWQALDEQVGRHQVQWRWVRGHAGDPGNERADALANQGVEAARGR.

The RNase H type-1 domain occupies 9-150; it reads DGQQVEMWTD…ADALANQGVE (142 aa). Residues D18, E56, D78, and D142 each contribute to the Mg(2+) site.

Belongs to the RNase H family. As to quaternary structure, monomer. Mg(2+) serves as cofactor.

The protein resides in the cytoplasm. The enzyme catalyses Endonucleolytic cleavage to 5'-phosphomonoester.. In terms of biological role, endonuclease that specifically degrades the RNA of RNA-DNA hybrids. This chain is Ribonuclease H, found in Bordetella bronchiseptica (strain ATCC BAA-588 / NCTC 13252 / RB50) (Alcaligenes bronchisepticus).